A 44-amino-acid chain; its full sequence is Large ribosomal subunit protein bL34 (44 aa).

Composition is skewed to basic residues over residues 1-14 and 31-44; these read MKRT…KRQK and LSAR…RLAV. A disordered region spans residues 1–44; the sequence is MKRTLGGTTRKRQKTSGFRARMRTASGRRVLSARRRRGRHRLAV.

The protein belongs to the bacterial ribosomal protein bL34 family.

This chain is Large ribosomal subunit protein bL34, found in Gloeobacter violaceus (strain ATCC 29082 / PCC 7421).